A 151-amino-acid polypeptide reads, in one-letter code: D-aminoacyl-tRNA deacylase (151 aa).

The short motif at 137-138 (GP) is the Gly-cisPro motif, important for rejection of L-amino acids element.

It belongs to the DTD family. As to quaternary structure, homodimer.

It localises to the cytoplasm. The enzyme catalyses glycyl-tRNA(Ala) + H2O = tRNA(Ala) + glycine + H(+). The catalysed reaction is a D-aminoacyl-tRNA + H2O = a tRNA + a D-alpha-amino acid + H(+). An aminoacyl-tRNA editing enzyme that deacylates mischarged D-aminoacyl-tRNAs. Also deacylates mischarged glycyl-tRNA(Ala), protecting cells against glycine mischarging by AlaRS. Acts via tRNA-based rather than protein-based catalysis; rejects L-amino acids rather than detecting D-amino acids in the active site. By recycling D-aminoacyl-tRNA to D-amino acids and free tRNA molecules, this enzyme counteracts the toxicity associated with the formation of D-aminoacyl-tRNA entities in vivo and helps enforce protein L-homochirality. The protein is D-aminoacyl-tRNA deacylase of Acaryochloris marina (strain MBIC 11017).